Consider the following 267-residue polypeptide: MFDKHTHTLIAQRLDQAEKQREQIRAISLDYPEITIEDAYAVQREWVRLKIAEGRTLKGHKIGLTSKAMQASSQISEPDYGALLDDMFFHDGSDIPTDRFIVPRIEVELAFVLAKPLRGPNCTLFDVYNATDYVIPALELIDARCHNIDPETQRPRKVFDTISDNAANAGVILGGRPIKPDELDLRWISALMYRNGVIEETGVAAGVLNHPANGVAWLANKLAPYDVQLEAGQIILGGSFTRPVPARKGDTFHVDYGNMGSISCRFV.

E106, E108, and E139 together coordinate Mg(2+).

The protein belongs to the hydratase/decarboxylase family. As to quaternary structure, homodecamer. Requires Mg(2+) as cofactor.

The catalysed reaction is (4Z)-2-oxohept-4-enedioate + H2O = (4S)-4-hydroxy-2-oxoheptanedioate. The protein operates within aromatic compound metabolism; 4-hydroxyphenylacetate degradation; pyruvate and succinate semialdehyde from 4-hydroxyphenylacetate: step 6/7. In terms of biological role, transforms 2-oxo-hept-4-ene-1,7-dioate (OHED) into 4-hydroxy-2-oxoheptanedioate, a step in the 4-hydroxyphenylacetic acid (4-HPA) degradation pathway. The polypeptide is 2-oxo-hept-4-ene-1,7-dioate hydratase (Escherichia coli).